The primary structure comprises 189 residues: Prostaglandin-H2 D-isomerase (189 aa).

An N-terminal signal peptide occupies residues 1–24; sequence MAALRMLWMGLVLLGLLGFPQTPA. Gln-25 is modified (pyrrolidone carboxylic acid). Asn-51 carries N-linked (GlcNAc...) asparagine glycosylation. Catalysis depends on Cys-65, which acts as the Nucleophile. The N-linked (GlcNAc...) asparagine glycan is linked to Asn-78. Residues Cys-89 and Cys-186 are joined by a disulfide bond.

It belongs to the calycin superfamily. Lipocalin family. In terms of assembly, monomer. In terms of tissue distribution, abundant in the brain and CNS, where it is expressed in tissues of the blood-brain barrier and secreted into the cerebro-spinal fluid. In the male reproductive system, it is expressed in the testis, efferent ducts and epididymis, and is secreted into the seminal fluid. In the eye, it is expressed in the pigmented epithelium of the retina and the nonpigmented epithelium of the ciliary body, and secreted into the aqueous humor. Low levels detected in various tissue fluids such as serum, normal urine, ascitic fluid and tear fluid. Also found in a number of other organs including the ear, heart and lung.

It is found in the rough endoplasmic reticulum. The protein resides in the nucleus membrane. Its subcellular location is the golgi apparatus. It localises to the cytoplasm. The protein localises to the perinuclear region. It is found in the secreted. The enzyme catalyses prostaglandin H2 = prostaglandin D2. Its function is as follows. Catalyzes the conversion of PGH2 to PGD2, a prostaglandin involved in smooth muscle contraction/relaxation and a potent inhibitor of platelet aggregation. Involved in a variety of CNS functions, such as sedation, NREM sleep and PGE2-induced allodynia, and may have an anti-apoptotic role in oligodendrocytes. Binds small non-substrate lipophilic molecules, including biliverdin, bilirubin, retinal, retinoic acid and thyroid hormone, and may act as a scavenger for harmful hydrophobic molecules and as a secretory retinoid and thyroid hormone transporter. Possibly involved in development and maintenance of the blood-brain, blood-retina, blood-aqueous humor and blood-testis barrier. It is likely to play important roles in both maturation and maintenance of the central nervous system and male reproductive system. Involved in PLA2G3-dependent maturation of mast cells. PLA2G3 is secreted by immature mast cells and acts on nearby fibroblasts upstream to PTDGS to synthesize PGD2, which in turn promotes mast cell maturation and degranulation via PTGDR. This is Prostaglandin-H2 D-isomerase (Ptgds) from Mus musculus (Mouse).